The chain runs to 1407 residues: DNA-directed RNA polymerase subunit beta' (1407 aa).

Zn(2+)-binding residues include C70, C72, C85, and C88. D460, D462, and D464 together coordinate Mg(2+). Residues C814, C888, C895, and C898 each coordinate Zn(2+). K972 is modified (N6-acetyllysine).

The protein belongs to the RNA polymerase beta' chain family. As to quaternary structure, the RNAP catalytic core consists of 2 alpha, 1 beta, 1 beta' and 1 omega subunit. When a sigma factor is associated with the core the holoenzyme is formed, which can initiate transcription. Mg(2+) is required as a cofactor. The cofactor is Zn(2+).

The enzyme catalyses RNA(n) + a ribonucleoside 5'-triphosphate = RNA(n+1) + diphosphate. Its function is as follows. DNA-dependent RNA polymerase catalyzes the transcription of DNA into RNA using the four ribonucleoside triphosphates as substrates. This is DNA-directed RNA polymerase subunit beta' from Shigella dysenteriae serotype 1 (strain Sd197).